We begin with the raw amino-acid sequence, 860 residues long: Envelope glycoprotein gp160 (860 aa).

The first 22 residues, 1 to 22 (MEPGRNQLFVVILLTSACLVYC), serve as a signal peptide directing secretion. Residues 23 to 678 (SQYVTVFYGI…LTSWVKYIQY (656 aa)) are Extracellular-facing. N-linked (GlcNAc...) asparagine; by host glycosylation occurs at asparagine 37. A disulfide bond links cysteine 44 and cysteine 57. 21 N-linked (GlcNAc...) asparagine; by host glycosylation sites follow: asparagine 70, asparagine 79, asparagine 112, asparagine 119, asparagine 144, asparagine 152, asparagine 194, asparagine 206, asparagine 238, asparagine 241, asparagine 272, asparagine 278, asparagine 289, asparagine 300, asparagine 310, asparagine 365, asparagine 371, asparagine 398, asparagine 410, asparagine 460, and asparagine 465. Cystine bridges form between cysteine 101–cysteine 214, cysteine 108–cysteine 205, cysteine 113–cysteine 166, cysteine 227–cysteine 257, and cysteine 237–cysteine 249. The interval 113 to 165 (CSRVQGNTTTPNPRTSSSTTSRPPTSAASIINETSNCIENNTCAGLGYEEMMQ) is V1. Positions 118–139 (GNTTTPNPRTSSSTTSRPPTSA) are disordered. Positions 119–139 (NTTTPNPRTSSSTTSRPPTSA) are enriched in low complexity. The V2 stretch occupies residues 166 to 205 (CEFNMKGLEQDKKRRYKDTWYLEDVVCDNTTAGTCYMRHC). A V3 region spans residues 305–337 (CKRPGNKTVLPITLMSGLVFHSQPINTRPRQAW). An intrachain disulfide couples cysteine 305 to cysteine 338. Disulfide bonds link cysteine 390–cysteine 444 and cysteine 397–cysteine 417. The segment at 397-417 (CNMTWFLNWVEDKNQTRRNYC) is V4. The V5 stretch occupies residues 460–468 (NRTHTNITF). The fusion peptide stretch occupies residues 511 to 531 (GVFVLGFLGFLATAGSAMGAR). Positions 574–590 (LQARVTAIEKYLKHQAQ) are immunosuppression. N-linked (GlcNAc...) asparagine; by host glycosylation is found at asparagine 610, asparagine 619, and asparagine 635. Residues 623 to 644 (QEWEKQVRYLEANISQSLEEAQ) adopt a coiled-coil conformation. Residues 656 to 677 (KLNSWDILGNWFDLTSWVKYIQ) form an MPER; binding to GalCer region. Residues 679-699 (GVHIVVGIIALRIAIYVVQLL) form a helical membrane-spanning segment. At 700–860 (SRFRKGYRPV…IRQGAELALL (161 aa)) the chain is on the cytoplasmic side. The short motif at 706–709 (YRPV) is the YXXV motif; contains endocytosis signal element. A lipid anchor (S-palmitoyl cysteine; by host) is attached at cysteine 772. A Di-leucine internalization motif motif is present at residues 859–860 (LL).

The mature envelope protein (Env) consists of a homotrimer of non-covalently associated gp120-gp41 heterodimers. The resulting complex protrudes from the virus surface as a spike. There seems to be as few as 10 spikes on the average virion. Interacts with human CD4, CCR5 and CXCR4, to form a P4HB/PDI-CD4-CXCR4-gp120 complex. Gp120 also interacts with the C-type lectins CD209/DC-SIGN and CLEC4M/DC-SIGNR (collectively referred to as DC-SIGN(R)). Gp120 and gp41 interact with GalCer. As to quaternary structure, the mature envelope protein (Env) consists of a homotrimer of non-covalently associated gp120-gp41 heterodimers. The resulting complex protrudes from the virus surface as a spike. There seems to be as few as 10 spikes on the average virion. Post-translationally, specific enzymatic cleavages in vivo yield mature proteins. Envelope glycoproteins are synthesized as an inactive precursor that is heavily N-glycosylated and processed likely by host cell furin in the Golgi to yield the mature SU and TM proteins. The cleavage site between SU and TM requires the minimal sequence [KR]-X-[KR]-R. In terms of processing, palmitoylation of the transmembrane protein and of Env polyprotein (prior to its proteolytic cleavage) is essential for their association with host cell membrane lipid rafts. Palmitoylation is therefore required for envelope trafficking to classical lipid rafts, but not for viral replication.

It localises to the virion membrane. It is found in the host cell membrane. Its subcellular location is the host endosome membrane. Its function is as follows. The surface protein gp120 (SU) attaches the virus to the host lymphoid cell by binding to the primary receptor CD4. This interaction induces a structural rearrangement creating a high affinity binding site for a chemokine coreceptor like CXCR4 and/or CCR5. This peculiar 2 stage receptor-interaction strategy allows gp120 to maintain the highly conserved coreceptor-binding site in a cryptic conformation, protected from neutralizing antibodies. Since CD4 also displays a binding site for the disulfide-isomerase P4HB/PDI, a P4HB/PDI-CD4-CXCR4-gp120 complex may form. In that complex, P4HB/PDI could reach and reduce gp120 disulfide bonds, causing major conformational changes in gp120. TXN, another PDI family member could also be involved in disulfide rearrangements in Env during fusion. These changes are transmitted to the transmembrane protein gp41 and are thought to activate its fusogenic potential by unmasking its fusion peptide. Functionally, the surface protein gp120 is a ligand for CD209/DC-SIGN and CLEC4M/DC-SIGNR, which are respectively found on dendritic cells (DCs), and on endothelial cells of liver sinusoids and lymph node sinuses. These interactions allow capture of viral particles at mucosal surfaces by these cells and subsequent transmission to permissive cells. DCs are professional antigen presenting cells, critical for host immunity by inducing specific immune responses against a broad variety of pathogens. They act as sentinels in various tissues where they take up antigen, process it, and present it to T-cells following migration to lymphoid organs. HIV subverts the migration properties of dendritic cells to gain access to CD4+ T-cells in lymph nodes. Virus transmission to permissive T-cells occurs either in trans (without DCs infection, through viral capture and transmission), or in cis (following DCs productive infection, through the usual CD4-gp120 interaction), thereby inducing a robust infection. In trans infection, bound virions remain infectious over days and it is proposed that they are not degraded, but protected in non-lysosomal acidic organelles within the DCs close to the cell membrane thus contributing to the viral infectious potential during DCs' migration from the periphery to the lymphoid tissues. On arrival at lymphoid tissues, intact virions recycle back to DCs' cell surface allowing virus transmission to CD4+ T-cells. Virion capture also seems to lead to MHC-II-restricted viral antigen presentation, and probably to the activation of HIV-specific CD4+ cells. The transmembrane protein gp41 (TM) acts as a class I viral fusion protein. Under the current model, the protein has at least 3 conformational states: pre-fusion native state, pre-hairpin intermediate state, and post-fusion hairpin state. During fusion of viral and target intracellular membranes, the coiled coil regions (heptad repeats) assume a trimer-of-hairpins structure, positioning the fusion peptide in close proximity to the C-terminal region of the ectodomain. The formation of this structure appears to drive apposition and subsequent fusion of viral and target cell membranes. Complete fusion occurs in host cell endosomes and is dynamin-dependent, however some lipid transfer might occur at the plasma membrane. The virus undergoes clathrin-dependent internalization long before endosomal fusion, thus minimizing the surface exposure of conserved viral epitopes during fusion and reducing the efficacy of inhibitors targeting these epitopes. Membranes fusion leads to delivery of the nucleocapsid into the cytoplasm. In terms of biological role, the envelope glycoprotein gp160 precursor down-modulates cell surface CD4 antigen by interacting with it in the endoplasmic reticulum and blocking its transport to the cell surface. Its function is as follows. The gp120-gp41 heterodimer seems to contribute to T-cell depletion during HIV-1 infection. The envelope glycoproteins expressed on the surface of infected cells induce apoptosis through an interaction with uninfected cells expressing the receptor (CD4) and the coreceptors CXCR4 or CCR5. This type of bystander killing may be obtained by at least three distinct mechanisms. First, the interaction between the 2 cells can induce cellular fusion followed by nuclear fusion within the syncytium. Syncytia are condemned to die from apoptosis. Second, the 2 interacting cells may not fuse entirely and simply exchange plasma membrane lipids, after a sort of hemifusion process, followed by rapid death. Third, it is possible that virus-infected cells, on the point of undergoing apoptosis, fuse with CD4-expressing cells, in which case apoptosis is rapidly transmitted from one cell to the other and thus occurs in a sort of contagious fashion. Functionally, the gp120-gp41 heterodimer allows rapid transcytosis of the virus through CD4 negative cells such as simple epithelial monolayers of the intestinal, rectal and endocervical epithelial barriers. Both gp120 and gp41 specifically recognize glycosphingolipids galactosyl-ceramide (GalCer) or 3' sulfo-galactosyl-ceramide (GalS) present in the lipid rafts structures of epithelial cells. Binding to these alternative receptors allows the rapid transcytosis of the virus through the epithelial cells. This transcytotic vesicle-mediated transport of virions from the apical side to the basolateral side of the epithelial cells does not involve infection of the cells themselves. The sequence is that of Envelope glycoprotein gp160 (env) from Homo sapiens (Human).